We begin with the raw amino-acid sequence, 92 residues long: Small ribosomal subunit protein uS19c (92 aa).

This sequence belongs to the universal ribosomal protein uS19 family.

Its subcellular location is the plastid. It localises to the chloroplast. Its function is as follows. Protein S19 forms a complex with S13 that binds strongly to the 16S ribosomal RNA. This chain is Small ribosomal subunit protein uS19c, found in Lactuca sativa (Garden lettuce).